Consider the following 650-residue polypeptide: Chaperone protein HtpG (650 aa).

An a; substrate-binding region spans residues 1 to 349 (MSKTVKKFET…SSDLPLNVSR (349 aa)). Residues 350–566 (EILQEDVQIK…EHGLNANMER (217 aa)) form a b region. The c stretch occupies residues 567 to 650 (ILRAMNQTVP…VADGKAAAGE (84 aa)).

Belongs to the heat shock protein 90 family. In terms of assembly, homodimer.

The protein localises to the cytoplasm. In terms of biological role, molecular chaperone. Has ATPase activity. The polypeptide is Chaperone protein HtpG (Geobacter sulfurreducens (strain ATCC 51573 / DSM 12127 / PCA)).